Reading from the N-terminus, the 412-residue chain is Lysosomal phospholipase A and acyltransferase (412 aa).

Positions 1–33 (MGLHLRPYRVGLLPDGLLFLLLLLMLLADPALP) are cleaved as a signal peptide. Aspartate 46 contributes to the substrate binding site. A disulfide bond links cysteine 65 and cysteine 89. N-linked (GlcNAc...) asparagine glycosylation occurs at asparagine 99. Serine 198 serves as the catalytic Acyl-ester intermediate. A Zn(2+)-binding site is contributed by serine 198. Methionine 199 provides a ligand contact to substrate. 2 N-linked (GlcNAc...) asparagine glycosylation sites follow: asparagine 273 and asparagine 289. Positions 340 and 355 each coordinate Zn(2+). Active-site charge relay system residues include aspartate 360 and histidine 392. Histidine 392 serves as a coordination point for Zn(2+). The N-linked (GlcNAc...) asparagine glycan is linked to asparagine 398.

Belongs to the AB hydrolase superfamily. Lipase family. In terms of processing, N-glycosylated. N-glycosylation is important for maturation of the enzyme and normal subcellular location. In terms of tissue distribution, detected in blood plasma (at protein level). Ubiquitous. Highly expressed in heart, placenta, skeletal muscle, kidney and pancreas. Detected at lower levels in spleen, thymus, prostate, testis, ovary, small intestine, colon and peripheral blood leukocytes.

The protein localises to the lysosome. It is found in the secreted. Its subcellular location is the membrane. It carries out the reaction a 1,2-diacyl-sn-glycero-3-phosphocholine + H2O = a 2-acyl-sn-glycero-3-phosphocholine + a fatty acid + H(+). The enzyme catalyses 1-hexadecanoyl-2-(9Z-octadecenoyl)-sn-glycero-3-phosphocholine + H2O = 2-(9Z-octadecenoyl)-sn-glycero-3-phosphocholine + hexadecanoate + H(+). It catalyses the reaction 1-hexadecanoyl-2-glutaroyl-sn-glycero-3-phosphocholine + H2O = 2-glutaroyl-sn-glycero-3-phosphocholine + hexadecanoate + H(+). The catalysed reaction is 1-hexadecanoyl-2-nonadioyl-sn-glycero-3-phosphocholine + H2O = 2-nonadioyl-sn-glycero-3-phosphocholine + hexadecanoate + H(+). It carries out the reaction 1-hexadecanoyl-2-(5-oxopentanoyl)-sn-glycero-3-phosphocholine + H2O = 2-(5-oxopentanoyl)-sn-glycero-3-phosphocholine + hexadecanoate + H(+). The enzyme catalyses 1-hexadecanoyl-2-(9-oxononanoyl)-sn-glycero-3-phosphocholine + H2O = 2-(9-oxononanoyl)-sn-glycero-3-phosphocholine + hexadecanoate + H(+). It catalyses the reaction 1,2-dihexadecanoyl-sn-glycero-3-phosphocholine + H2O = 2-hexadecanoyl-sn-glycero-3-phosphocholine + hexadecanoate + H(+). The catalysed reaction is a 1,2-diacyl-sn-glycero-3-phosphocholine + H2O = a 1-acyl-sn-glycero-3-phosphocholine + a fatty acid + H(+). It carries out the reaction 1,2-di-(9Z-octadecenoyl)-sn-glycero-3-phosphocholine + H2O = 1-(9Z-octadecenoyl)-sn-glycero-3-phosphocholine + (9Z)-octadecenoate + H(+). The enzyme catalyses 1-hexadecanoyl-2-(9Z-octadecenoyl)-sn-glycero-3-phosphocholine + H2O = 1-hexadecanoyl-sn-glycero-3-phosphocholine + (9Z)-octadecenoate + H(+). It catalyses the reaction 1,2-dihexadecanoyl-sn-glycero-3-phosphocholine + H2O = 1-hexadecanoyl-sn-glycero-3-phosphocholine + hexadecanoate + H(+). The catalysed reaction is a 1-acyl-sn-glycero-3-phosphocholine + H2O = sn-glycerol 3-phosphocholine + a fatty acid + H(+). It carries out the reaction 1-hexadecanoyl-sn-glycero-3-phosphocholine + H2O = sn-glycerol 3-phosphocholine + hexadecanoate + H(+). The enzyme catalyses N-(acetyl)-sphing-4-enine + a 1,2-diacyl-sn-glycero-3-phosphoethanolamine = 1-O-acyl-N-(acetyl)-sphing-4-enine + a 2-acyl-sn-glycero-3-phosphoethanolamine. It catalyses the reaction 1-hexadecanoyl-2-(9Z-octadecenoyl)-sn-glycero-3-phosphoethanolamine + N-(acetyl)-sphing-4-enine = 2-(9Z-octadecenoyl)-sn-glycero-3-phosphoethanolamine + 1-hexadecanoyl-N-(acetyl)-sphing-4-enine. The catalysed reaction is 1-hexadecanoyl-2-(9Z,12Z-octadecadienoyl)-sn-glycero-3-phosphoethanolamine + N-(acetyl)-sphing-4-enine = 2-(9Z,12Z)-octadecadienoyl-sn-glycero-3-phosphoethanolamine + 1-hexadecanoyl-N-(acetyl)-sphing-4-enine. It carries out the reaction 1-hexadecanoyl-2-(5Z,8Z,11Z,14Z-eicosatetraenoyl)-sn-glycero-3-phosphoethanolamine + N-(acetyl)-sphing-4-enine = 2-(5Z,8Z,11Z,14Z)-eicosatetraenoyl-sn-glycero-3-phosphoethanolamine + 1-hexadecanoyl-N-(acetyl)-sphing-4-enine. The enzyme catalyses N-(acetyl)-sphing-4-enine + a 1,2-diacyl-sn-glycero-3-phosphoethanolamine = 1-O-acyl-N-(acetyl)-sphing-4-enine + a 1-acyl-sn-glycero-3-phosphoethanolamine. It catalyses the reaction 1-hexadecanoyl-2-(9Z-octadecenoyl)-sn-glycero-3-phosphoethanolamine + N-(acetyl)-sphing-4-enine = 1-(9Z-octadecenoyl)-N-(acetyl)-sphing-4-enine + 1-hexadecanoyl-sn-glycero-3-phosphoethanolamine. The catalysed reaction is 1-hexadecanoyl-2-(9Z,12Z-octadecadienoyl)-sn-glycero-3-phosphoethanolamine + N-(acetyl)-sphing-4-enine = 1-(9Z,12Z-octadecadienoyl)-N-acetylsphing-4-enine + 1-hexadecanoyl-sn-glycero-3-phosphoethanolamine. It carries out the reaction 1-hexadecanoyl-2-(5Z,8Z,11Z,14Z-eicosatetraenoyl)-sn-glycero-3-phosphoethanolamine + N-(acetyl)-sphing-4-enine = 1-(5Z,8Z,11Z,14Z)-eicosatetraenoyl-N-(acetyl)-sphing-4-enine + 1-hexadecanoyl-sn-glycero-3-phosphoethanolamine. The enzyme catalyses N-(acetyl)-sphing-4-enine + a 1,2-diacyl-sn-glycero-3-phosphocholine = 1-O-acyl-N-(acetyl)-sphing-4-enine + a 1-acyl-sn-glycero-3-phosphocholine. It catalyses the reaction 1-hexadecanoyl-2-(9Z-octadecenoyl)-sn-glycero-3-phosphocholine + N-(acetyl)-sphing-4-enine = 1-(9Z-octadecenoyl)-N-(acetyl)-sphing-4-enine + 1-hexadecanoyl-sn-glycero-3-phosphocholine. The catalysed reaction is 1-hexadecanoyl-2-(9Z,12Z-octadecadienoyl)-sn-glycero-3-phosphocholine + N-(acetyl)-sphing-4-enine = 1-(9Z,12Z-octadecadienoyl)-N-acetylsphing-4-enine + 1-hexadecanoyl-sn-glycero-3-phosphocholine. It carries out the reaction 1-hexadecanoyl-2-(5Z,8Z,11Z,14Z-eicosatetraenoyl)-sn-glycero-3-phosphocholine + N-(acetyl)-sphing-4-enine = 1-(5Z,8Z,11Z,14Z)-eicosatetraenoyl-N-(acetyl)-sphing-4-enine + 1-hexadecanoyl-sn-glycero-3-phosphocholine. The enzyme catalyses 1-hexadecanoyl-2-(4Z,7Z,10Z,13Z,16Z,19Z-docosahexaenoyl)-sn-glycero-3-phosphocholine + N-(acetyl)-sphing-4-enine = 1-(4Z,7Z,10Z,13Z,16Z,19Z-docosahexaenoyl)-N-(acetyl)-sphing-4-enine + 1-hexadecanoyl-sn-glycero-3-phosphocholine. It catalyses the reaction 1-octadecanoyl-2-(9Z-octadecenoyl)-sn-glycero-3-phosphocholine + N-(acetyl)-sphing-4-enine = 1-(9Z-octadecenoyl)-N-(acetyl)-sphing-4-enine + 1-octadecanoyl-sn-glycero-3-phosphocholine. The catalysed reaction is 1-octadecanoyl-2-(9Z,12Z)-octadecadienoyl-sn-glycero-3-phosphocholine + N-(acetyl)-sphing-4-enine = 1-(9Z,12Z-octadecadienoyl)-N-acetylsphing-4-enine + 1-octadecanoyl-sn-glycero-3-phosphocholine. It carries out the reaction 1-octadecanoyl-2-(5Z,8Z,11Z,14Z-eicosatetraenoyl)-sn-glycero-3-phosphocholine + N-(acetyl)-sphing-4-enine = 1-(5Z,8Z,11Z,14Z)-eicosatetraenoyl-N-(acetyl)-sphing-4-enine + 1-octadecanoyl-sn-glycero-3-phosphocholine. The enzyme catalyses 1-(9Z-octadecenoyl)-2-hexadecanoyl-sn-glycero-3-phosphocholine + N-(acetyl)-sphing-4-enine = 1-hexadecanoyl-N-(acetyl)-sphing-4-enine + 1-(9Z-octadecenoyl)-sn-glycero-3-phosphocholine. It catalyses the reaction 1-(9Z)-octadecenoyl-2-octadecanoyl-sn-glycero-3-phosphocholine + N-(acetyl)-sphing-4-enine = 1-octadecanoyl-N-(acetyl)-sphing-4-enine + 1-(9Z-octadecenoyl)-sn-glycero-3-phosphocholine. The catalysed reaction is 1,2-di-(9Z-octadecenoyl)-sn-glycero-3-phosphocholine + N-(acetyl)-sphing-4-enine = 1-(9Z-octadecenoyl)-N-(acetyl)-sphing-4-enine + 1-(9Z-octadecenoyl)-sn-glycero-3-phosphocholine. It carries out the reaction N-(acetyl)-sphing-4-enine + a 1,2-diacyl-sn-glycero-3-phosphocholine = 1-O-acyl-N-(acetyl)-sphing-4-enine + a 2-acyl-sn-glycero-3-phosphocholine. The enzyme catalyses 1-hexadecanoyl-2-(9Z-octadecenoyl)-sn-glycero-3-phosphocholine + N-(acetyl)-sphing-4-enine = 1-hexadecanoyl-N-(acetyl)-sphing-4-enine + 2-(9Z-octadecenoyl)-sn-glycero-3-phosphocholine. It catalyses the reaction 1-hexadecanoyl-2-(9Z,12Z-octadecadienoyl)-sn-glycero-3-phosphocholine + N-(acetyl)-sphing-4-enine = 2-(9Z,12Z-octadecadienoyl)-sn-glycero-3-phosphocholine + 1-hexadecanoyl-N-(acetyl)-sphing-4-enine. The catalysed reaction is 1-hexadecanoyl-2-(5Z,8Z,11Z,14Z-eicosatetraenoyl)-sn-glycero-3-phosphocholine + N-(acetyl)-sphing-4-enine = 1-hexadecanoyl-N-(acetyl)-sphing-4-enine + 2-(5Z,8Z,11Z,14Z)-eicosatetraenoyl-sn-glycero-3-phosphocholine. It carries out the reaction 1-hexadecanoyl-2-(4Z,7Z,10Z,13Z,16Z,19Z-docosahexaenoyl)-sn-glycero-3-phosphocholine + N-(acetyl)-sphing-4-enine = 2-(4Z,7Z,10Z,13Z,16Z,19Z-docosahexaenoyl)-sn-glycero-3-phosphocholine + 1-hexadecanoyl-N-(acetyl)-sphing-4-enine. The enzyme catalyses 1-hexadecanoyl-2-nonadioyl-sn-glycero-3-phosphocholine + N-(acetyl)-sphing-4-enine = 2-nonadioyl-sn-glycero-3-phosphocholine + 1-hexadecanoyl-N-(acetyl)-sphing-4-enine. It catalyses the reaction 1-octadecanoyl-2-(9Z-octadecenoyl)-sn-glycero-3-phosphocholine + N-(acetyl)-sphing-4-enine = 1-octadecanoyl-N-(acetyl)-sphing-4-enine + 2-(9Z-octadecenoyl)-sn-glycero-3-phosphocholine. The catalysed reaction is 1-octadecanoyl-2-(5Z,8Z,11Z,14Z-eicosatetraenoyl)-sn-glycero-3-phosphocholine + N-(acetyl)-sphing-4-enine = 1-octadecanoyl-N-(acetyl)-sphing-4-enine + 2-(5Z,8Z,11Z,14Z)-eicosatetraenoyl-sn-glycero-3-phosphocholine. It carries out the reaction 1-(9Z-octadecenoyl)-2-hexadecanoyl-sn-glycero-3-phosphocholine + N-(acetyl)-sphing-4-enine = 1-(9Z-octadecenoyl)-N-(acetyl)-sphing-4-enine + 2-hexadecanoyl-sn-glycero-3-phosphocholine. The enzyme catalyses 1-(9Z)-octadecenoyl-2-octadecanoyl-sn-glycero-3-phosphocholine + N-(acetyl)-sphing-4-enine = 2-octadecanoyl-sn-glycero-3-phosphocholine + 1-(9Z-octadecenoyl)-N-(acetyl)-sphing-4-enine. It catalyses the reaction a 1,2-diacyl-sn-glycero-3-phospho-L-serine + N-(acetyl)-sphing-4-enine = a 2-acyl-sn-glycero-3-phospho-L-serine + 1-O-acyl-N-(acetyl)-sphing-4-enine. The catalysed reaction is 1-octadecanoyl-2-(9Z-octadecenoyl)-sn-glycero-3-phospho-L-serine + N-(acetyl)-sphing-4-enine = 2-(9Z-octadecenoyl)-sn-glycero-3-phospho-L-serine + 1-octadecanoyl-N-(acetyl)-sphing-4-enine. It carries out the reaction a 1,2-diacyl-sn-glycero-3-phospho-L-serine + N-(acetyl)-sphing-4-enine = 1-O-acyl-N-(acetyl)-sphing-4-enine + a 1-acyl-sn-glycero-3-phospho-L-serine. The enzyme catalyses 1-octadecanoyl-2-(9Z-octadecenoyl)-sn-glycero-3-phospho-L-serine + N-(acetyl)-sphing-4-enine = 1-octadecanoyl-sn-glycero-3-phosphoserine + 1-(9Z-octadecenoyl)-N-(acetyl)-sphing-4-enine. It catalyses the reaction a 1,2-diacyl-sn-glycero-3-phospho-(1'-sn-glycerol) + N-(acetyl)-sphing-4-enine = 2-acyl-sn-glycero-3-phospho-(1'-sn-glycerol) + 1-O-acyl-N-(acetyl)-sphing-4-enine. The catalysed reaction is 1-octadecanoyl-2-(9Z-octadecenoyl)-sn-glycero-3-phospho-(1'-sn-glycerol) + N-(acetyl)-sphing-4-enine = 2-(9Z-octadecenoyl)-sn-glycero-3-phospho-(1'-sn-glycerol) + 1-octadecanoyl-N-(acetyl)-sphing-4-enine. It carries out the reaction a 1,2-diacyl-sn-glycero-3-phospho-(1'-sn-glycerol) + N-(acetyl)-sphing-4-enine = 1-O-acyl-N-(acetyl)-sphing-4-enine + 1-acyl-sn-glycero-3-phospho-(1'-sn-glycerol). The enzyme catalyses 1-octadecanoyl-2-(9Z-octadecenoyl)-sn-glycero-3-phospho-(1'-sn-glycerol) + N-(acetyl)-sphing-4-enine = 1-octadecanoyl-sn-glycero-3-phospho-(1'-sn-glycerol) + 1-(9Z-octadecenoyl)-N-(acetyl)-sphing-4-enine. It catalyses the reaction an N-acylethanolamine + a 1,2-diacyl-sn-glycero-3-phosphocholine = 2-(acylamino)ethyl fatty acid + a 2-acyl-sn-glycero-3-phosphocholine. The catalysed reaction is an N-acylethanolamine + a 1,2-diacyl-sn-glycero-3-phosphocholine = 2-(acylamino)ethyl fatty acid + a 1-acyl-sn-glycero-3-phosphocholine. It carries out the reaction N-(5Z,8Z,11Z,14Z-eicosatetraenoyl)-ethanolamine + 1,2-di-(9Z-octadecenoyl)-sn-glycero-3-phosphocholine = 2-[(5Z,8Z,11Z,14Z)-eicosatetraenoylamino]ethyl (9Z)-octadecenoate + (9Z-octadecenoyl)-sn-glycero-3-phosphocholine. The enzyme catalyses N-(9Z-octadecenoyl) ethanolamine + 1,2-di-(9Z-octadecenoyl)-sn-glycero-3-phosphocholine = 2-[(9Z)-octadecenoylamino]ethyl (9Z)-octadecenoate + (9Z-octadecenoyl)-sn-glycero-3-phosphocholine. It catalyses the reaction a 3-acyl-sn-glycerol + a 1,2-diacyl-sn-glycero-3-phosphocholine = a 1,3-diacylglycerol + a 1-acyl-sn-glycero-3-phosphocholine. The catalysed reaction is a 3-acyl-sn-glycerol + a 1,2-diacyl-sn-glycero-3-phosphocholine = a 1,3-diacylglycerol + a 2-acyl-sn-glycero-3-phosphocholine. It carries out the reaction 3-(9Z-octadecenoyl)-sn-glycerol + 1,2-di-(9Z-octadecenoyl)-sn-glycero-3-phosphocholine = 1,3-di-(9Z-octadecenoyl)-glycerol + (9Z-octadecenoyl)-sn-glycero-3-phosphocholine. The enzyme catalyses 3-hexadecanoyl-sn-glycerol + 1,2-di-(9Z-octadecenoyl)-sn-glycero-3-phosphocholine = 1-(9Z)-octadecenoyl-3-hexadecanoyl-sn-glycerol + (9Z-octadecenoyl)-sn-glycero-3-phosphocholine. It catalyses the reaction a 1-acyl-sn-glycerol + a 1,2-diacyl-sn-glycero-3-phosphocholine = a 1,3-diacylglycerol + a 2-acyl-sn-glycero-3-phosphocholine. The catalysed reaction is a 1-acyl-sn-glycerol + a 1,2-diacyl-sn-glycero-3-phosphocholine = a 1,3-diacylglycerol + a 1-acyl-sn-glycero-3-phosphocholine. It carries out the reaction 1-(9Z-octadecenoyl)-sn-glycerol + 1,2-di-(9Z-octadecenoyl)-sn-glycero-3-phosphocholine = 1,3-di-(9Z-octadecenoyl)-glycerol + (9Z-octadecenoyl)-sn-glycero-3-phosphocholine. The enzyme catalyses 1-hexadecanoyl-sn-glycerol + 1,2-di-(9Z-octadecenoyl)-sn-glycero-3-phosphocholine = 1-hexadecanoyl-3-(9Z)-octadecenoyl-sn-glycerol + (9Z-octadecenoyl)-sn-glycero-3-phosphocholine. It catalyses the reaction a 2-acylglycerol + a 1,2-diacyl-sn-glycero-3-phosphocholine = a 1,2-diacylglycerol + a 2-acyl-sn-glycero-3-phosphocholine. The catalysed reaction is a 2-acylglycerol + a 1,2-diacyl-sn-glycero-3-phosphocholine = a 1,2-diacylglycerol + a 1-acyl-sn-glycero-3-phosphocholine. It carries out the reaction 2-hexadecanoylglycerol + 1,2-di-(9Z-octadecenoyl)-sn-glycero-3-phosphocholine = 1-(9Z)-octadecenoyl-2-hexadecanoylglycerol + (9Z-octadecenoyl)-sn-glycero-3-phosphocholine. The enzyme catalyses 1-O-alkylglycerol + a 1,2-diacyl-sn-glycero-3-phosphocholine = 1-O-alkyl-3-acylglycerol + a 1-acyl-sn-glycero-3-phosphocholine. It catalyses the reaction 1-O-alkylglycerol + a 1,2-diacyl-sn-glycero-3-phosphocholine = 1-O-alkyl-3-acylglycerol + a 2-acyl-sn-glycero-3-phosphocholine. The catalysed reaction is 1-O-hexadecylglycerol + 1,2-di-(9Z-octadecenoyl)-sn-glycero-3-phosphocholine = 1-O-hexadecyl-3-(9Z)-octadecenoylglycerol + (9Z-octadecenoyl)-sn-glycero-3-phosphocholine. It carries out the reaction 1-O-alkyl-2-acyl-sn-glycerol + a 1,2-diacyl-sn-glycero-3-phosphocholine = 1-O-alkyl-2,3-diacyl-sn-glycerol + a 2-acyl-sn-glycero-3-phosphocholine. The enzyme catalyses 1-O-alkyl-2-acyl-sn-glycerol + a 1,2-diacyl-sn-glycero-3-phosphocholine = 1-O-alkyl-2,3-diacyl-sn-glycerol + a 1-acyl-sn-glycero-3-phosphocholine. It catalyses the reaction 1-O-hexadecyl-2-acetyl-sn-glycerol + 1,2-di-(9Z-octadecenoyl)-sn-glycero-3-phosphocholine = 1-O-hexadecyl-2-acetyl-3-(9Z)-octadecenoyl-sn-glycerol + (9Z-octadecenoyl)-sn-glycero-3-phosphocholine. The catalysed reaction is 1-O-hexadecyl-2-O-methyl-sn-glycerol + 1,2-di-(9Z-octadecenoyl)-sn-glycero-3-phosphocholine = 1-O-hexadecyl-2-O-methyl-3-(9Z)-octadecenoyl-sn-glycerol + (9Z-octadecenoyl)-sn-glycero-3-phosphocholine. It carries out the reaction a 1,2-diacyl-sn-glycero-3-phosphoethanolamine + H2O = a 1-acyl-sn-glycero-3-phosphoethanolamine + a fatty acid + H(+). The enzyme catalyses 1-acyl-2-(5Z,8Z,11Z,14Z)-eicosatetraenoyl-sn-glycero-3-phosphoethanolamine + H2O = a 1-acyl-sn-glycero-3-phosphoethanolamine + (5Z,8Z,11Z,14Z)-eicosatetraenoate + H(+). It catalyses the reaction a 1,2-diacyl-sn-glycero-3-phospho-(1'-sn-glycerol) + H2O = 1-acyl-sn-glycero-3-phospho-(1'-sn-glycerol) + a fatty acid + H(+). The catalysed reaction is 1-hexadecanoyl-2-(9Z-octadecenoyl)-sn-glycero-3-phospho-(1'-sn-glycerol) + H2O = 1-hexadecanoyl-sn-glycero-3-phospho-(1'-sn-glycerol) + (9Z)-octadecenoate + H(+). It carries out the reaction a 1,2-diacyl-sn-glycero-3-phospho-(1'-sn-glycerol) + H2O = 2-acyl-sn-glycero-3-phospho-(1'-sn-glycerol) + a fatty acid + H(+). The enzyme catalyses 1-hexadecanoyl-2-(9Z-octadecenoyl)-sn-glycero-3-phospho-(1'-sn-glycerol) + H2O = 2-(9Z-octadecenoyl)-sn-glycero-3-phospho-(1'-sn-glycerol) + hexadecanoate + H(+). With respect to regulation, inhibited by zinc ions at neutral pH. Zinc ions in plasma may keep the enzyme from hydrolyzing inappropriate substrates. Functionally, has dual calcium-independent phospholipase and O-acyltransferase activities with a potential role in glycerophospholipid homeostasis and remodeling of acyl groups of lipophilic alcohols present in acidic cellular compartments. Catalyzes hydrolysis of the ester bond of the fatty acyl group attached at sn-1 or sn-2 position of phospholipids (phospholipase A1 or A2 activity) and transfer it to the hydroxyl group at the first carbon of lipophilic alcohols (O-acyltransferase activity). Among preferred fatty acyl donors are phosphatidylcholines, phosphatidylethanolamines, phosphatidylglycerols and phosphatidylserines. Favors sn-2 over sn-1 deacylation of unsaturated fatty acyl groups of phosphatidylcholines, phosphatidylethanolamines, and phosphatidylglycerols. Among preferred fatty acyl acceptors are natural lipophilic alcohols including short-chain ceramide N-acetyl-sphingosine (C2 ceramide), alkylacylglycerols, monoacylglycerols, and acylethanolamides such as anandamide and oleoylethanolamide. Selectively hydrolyzes the sn-1 fatty acyl group of truncated oxidized phospholipids and may play a role in detoxification of reactive oxidized phospholipids during oxidative stress. Required for normal phospholipid degradation in alveolar macrophages with potential implications in the clearance of pulmonary surfactant, which is mainly composed of dipalmitoylphosphatidylcholine (1,2-dihexadecanoyl-sn-glycero-3-phosphocholine). Involved in the first step of bis(monoacylglycero)phosphate (BMP) de novo synthesis from phosphatidylglycerol (1,2-diacyl-sn-glycero-3-phospho-(1'-sn-glycerol), PG). BMP is an important player in cargo sorting and degradation, regulation of cellular cholesterol levels and intercellular communication. At neutral pH, hydrolyzes the sn-1 fatty acyl group of the lysophosphatidylcholines. This Homo sapiens (Human) protein is Lysosomal phospholipase A and acyltransferase.